Here is a 284-residue protein sequence, read N- to C-terminus: uncharacterized protein (284 aa).

The signal sequence occupies residues Met1 to Ala23.

Belongs to the surface antigen msp4 family.

This is an uncharacterized protein from Brucella melitensis biotype 1 (strain ATCC 23456 / CCUG 17765 / NCTC 10094 / 16M).